The chain runs to 327 residues: Lipoyl synthase (327 aa).

Residues Cys72, Cys77, Cys83, Cys98, Cys102, Cys105, and Ser313 each contribute to the [4Fe-4S] cluster site. The Radical SAM core domain occupies 83-302 (CWSHGTATIM…RRVGLEKGFL (220 aa)).

Belongs to the radical SAM superfamily. Lipoyl synthase family. [4Fe-4S] cluster is required as a cofactor.

It is found in the cytoplasm. The enzyme catalyses [[Fe-S] cluster scaffold protein carrying a second [4Fe-4S](2+) cluster] + N(6)-octanoyl-L-lysyl-[protein] + 2 oxidized [2Fe-2S]-[ferredoxin] + 2 S-adenosyl-L-methionine + 4 H(+) = [[Fe-S] cluster scaffold protein] + N(6)-[(R)-dihydrolipoyl]-L-lysyl-[protein] + 4 Fe(3+) + 2 hydrogen sulfide + 2 5'-deoxyadenosine + 2 L-methionine + 2 reduced [2Fe-2S]-[ferredoxin]. It functions in the pathway protein modification; protein lipoylation via endogenous pathway; protein N(6)-(lipoyl)lysine from octanoyl-[acyl-carrier-protein]: step 2/2. In terms of biological role, catalyzes the radical-mediated insertion of two sulfur atoms into the C-6 and C-8 positions of the octanoyl moiety bound to the lipoyl domains of lipoate-dependent enzymes, thereby converting the octanoylated domains into lipoylated derivatives. This is Lipoyl synthase from Francisella philomiragia subsp. philomiragia (strain ATCC 25017 / CCUG 19701 / FSC 153 / O#319-036).